The following is a 660-amino-acid chain: Bifunctional polymyxin resistance protein ArnA (660 aa).

The interval 1–304 (MKAVIFAYHD…TLGLVAGARL (304 aa)) is formyltransferase ArnAFT. Histidine 104 (proton donor; for formyltransferase activity) is an active-site residue. Residues arginine 114 and 136–140 (VKRAD) each bind (6R)-10-formyltetrahydrofolate. Positions 314–660 (RRIRVLILGV…RSVDVAERAS (347 aa)) are dehydrogenase ArnADH. Residues aspartate 347 and 368–369 (DI) contribute to the NAD(+) site. UDP-alpha-D-glucuronate-binding positions include alanine 393, tyrosine 398, and 432 to 433 (TS). Catalysis depends on glutamate 434, which acts as the Proton acceptor; for decarboxylase activity. UDP-alpha-D-glucuronate is bound by residues arginine 460, asparagine 492, 526 to 535 (KLIDGGQQKR), and tyrosine 613. The active-site Proton donor; for decarboxylase activity is the arginine 619.

The protein in the N-terminal section; belongs to the Fmt family. UDP-L-Ara4N formyltransferase subfamily. This sequence in the C-terminal section; belongs to the NAD(P)-dependent epimerase/dehydratase family. UDP-glucuronic acid decarboxylase subfamily. In terms of assembly, homohexamer, formed by a dimer of trimers.

The catalysed reaction is UDP-alpha-D-glucuronate + NAD(+) = UDP-beta-L-threo-pentopyranos-4-ulose + CO2 + NADH. The enzyme catalyses UDP-4-amino-4-deoxy-beta-L-arabinose + (6R)-10-formyltetrahydrofolate = UDP-4-deoxy-4-formamido-beta-L-arabinose + (6S)-5,6,7,8-tetrahydrofolate + H(+). Its pathway is nucleotide-sugar biosynthesis; UDP-4-deoxy-4-formamido-beta-L-arabinose biosynthesis; UDP-4-deoxy-4-formamido-beta-L-arabinose from UDP-alpha-D-glucuronate: step 1/3. It functions in the pathway nucleotide-sugar biosynthesis; UDP-4-deoxy-4-formamido-beta-L-arabinose biosynthesis; UDP-4-deoxy-4-formamido-beta-L-arabinose from UDP-alpha-D-glucuronate: step 3/3. It participates in bacterial outer membrane biogenesis; lipopolysaccharide biosynthesis. Functionally, bifunctional enzyme that catalyzes the oxidative decarboxylation of UDP-glucuronic acid (UDP-GlcUA) to UDP-4-keto-arabinose (UDP-Ara4O) and the addition of a formyl group to UDP-4-amino-4-deoxy-L-arabinose (UDP-L-Ara4N) to form UDP-L-4-formamido-arabinose (UDP-L-Ara4FN). The modified arabinose is attached to lipid A and is required for resistance to polymyxin and cationic antimicrobial peptides. The protein is Bifunctional polymyxin resistance protein ArnA of Salmonella newport (strain SL254).